Here is a 368-residue protein sequence, read N- to C-terminus: uncharacterized protein (368 aa).

Disordered stretches follow at residues 1 to 22 and 282 to 317; these read MEKSSNTTGSGGPKSDSQLPEK and KHLGRRSKKAQKRVEKMKKAYKESKEEKASSQEPPA. A compositionally biased stretch (basic and acidic residues) spans 293 to 311; that stretch reads KRVEKMKKAYKESKEEKAS.

This is an uncharacterized protein from Mus musculus (Mouse).